The chain runs to 322 residues: Deoxyhypusine hydroxylase (322 aa).

4 HEAT-like PBS-type repeats span residues 76–102 (LKHEVAYVLGQTGNLACAATLREVMLD), 109–135 (VRHEASEALGALGDAASLGALERSRRE), 234–260 (FKHEIAYVFGQIGNPCVVPHLQEVLKR), and 267–293 (VRHEAAEALGSIATDDVLPVLKRHLQD). H78, E79, H111, E112, H236, E237, H269, and E270 together coordinate Fe cation.

Belongs to the deoxyhypusine hydroxylase family. It depends on Fe(2+) as a cofactor.

The protein resides in the cytoplasm. It localises to the nucleus. It carries out the reaction [eIF5A protein]-deoxyhypusine + AH2 + O2 = [eIF5A protein]-hypusine + A + H2O. It functions in the pathway protein modification; eIF5A hypusination. In terms of biological role, catalyzes the hydroxylation of the N(6)-(4-aminobutyl)-L-lysine intermediate to form hypusine, an essential post-translational modification only found in mature eIF-5A factor. This chain is Deoxyhypusine hydroxylase, found in Eremothecium gossypii (strain ATCC 10895 / CBS 109.51 / FGSC 9923 / NRRL Y-1056) (Yeast).